The following is a 274-amino-acid chain: Diaminopimelate epimerase (274 aa).

Substrate-binding residues include Asn11, Gln44, and Asn64. Cys73 acts as the Proton donor in catalysis. Residues 74 to 75 (GN), Asn157, Asn190, and 208 to 209 (ER) contribute to the substrate site. Cys217 (proton acceptor) is an active-site residue. 218-219 (GS) serves as a coordination point for substrate.

It belongs to the diaminopimelate epimerase family. As to quaternary structure, homodimer.

The protein resides in the cytoplasm. It catalyses the reaction (2S,6S)-2,6-diaminopimelate = meso-2,6-diaminopimelate. It functions in the pathway amino-acid biosynthesis; L-lysine biosynthesis via DAP pathway; DL-2,6-diaminopimelate from LL-2,6-diaminopimelate: step 1/1. Catalyzes the stereoinversion of LL-2,6-diaminopimelate (L,L-DAP) to meso-diaminopimelate (meso-DAP), a precursor of L-lysine and an essential component of the bacterial peptidoglycan. This is Diaminopimelate epimerase from Erwinia tasmaniensis (strain DSM 17950 / CFBP 7177 / CIP 109463 / NCPPB 4357 / Et1/99).